The following is a 1173-amino-acid chain: Eukaryotic translation initiation factor 3 subunit A (1173 aa).

In terms of domain architecture, PCI spans 319–502 (LQRMAAHVLL…NSIYFGTDLT (184 aa)). Disordered stretches follow at residues 589 to 613 (QNNA…LAEQ) and 836 to 1173 (AAEA…PVQL). Basic and acidic residues-rich tracts occupy residues 836–900 (AAEA…RGGD), 925–1011 (DRNE…EPDS), 1028–1081 (SRDD…DAAP), and 1090–1125 (DAPR…RAPK). A compositionally biased stretch (gly residues) spans 1128-1142 (GPSGGTGTAAGGGGN). The segment covering 1149–1165 (PRDEPAPKRDQPQDKGK) has biased composition (basic and acidic residues).

It belongs to the eIF-3 subunit A family. As to quaternary structure, component of the eukaryotic translation initiation factor 3 (eIF-3) complex. The eIF-3 complex interacts with pix.

It localises to the cytoplasm. Functionally, RNA-binding component of the eukaryotic translation initiation factor 3 (eIF-3) complex, which is involved in protein synthesis of a specialized repertoire of mRNAs and, together with other initiation factors, stimulates binding of mRNA and methionyl-tRNAi to the 40S ribosome. The eIF-3 complex specifically targets and initiates translation of a subset of mRNAs involved in cell proliferation. The protein is Eukaryotic translation initiation factor 3 subunit A of Drosophila persimilis (Fruit fly).